The sequence spans 638 residues: Phosphomethylpyrimidine synthase (638 aa).

Substrate is bound by residues asparagine 236, methionine 265, tyrosine 294, histidine 330, 350-352, 391-394, and glutamate 430; these read SRG and DGLR. Histidine 434 contacts Zn(2+). Tyrosine 457 provides a ligand contact to substrate. Histidine 498 serves as a coordination point for Zn(2+). [4Fe-4S] cluster-binding residues include cysteine 578, cysteine 581, and cysteine 586.

Belongs to the ThiC family. In terms of assembly, homodimer. [4Fe-4S] cluster is required as a cofactor.

The enzyme catalyses 5-amino-1-(5-phospho-beta-D-ribosyl)imidazole + S-adenosyl-L-methionine = 4-amino-2-methyl-5-(phosphooxymethyl)pyrimidine + CO + 5'-deoxyadenosine + formate + L-methionine + 3 H(+). It participates in cofactor biosynthesis; thiamine diphosphate biosynthesis. Catalyzes the synthesis of the hydroxymethylpyrimidine phosphate (HMP-P) moiety of thiamine from aminoimidazole ribotide (AIR) in a radical S-adenosyl-L-methionine (SAM)-dependent reaction. In Polaromonas sp. (strain JS666 / ATCC BAA-500), this protein is Phosphomethylpyrimidine synthase.